The sequence spans 176 residues: ATP-dependent protease subunit HslV (176 aa).

The active site involves T5. A161, C164, and T167 together coordinate Na(+).

Belongs to the peptidase T1B family. HslV subfamily. A double ring-shaped homohexamer of HslV is capped on each side by a ring-shaped HslU homohexamer. The assembly of the HslU/HslV complex is dependent on binding of ATP.

It is found in the cytoplasm. The catalysed reaction is ATP-dependent cleavage of peptide bonds with broad specificity.. With respect to regulation, allosterically activated by HslU binding. Functionally, protease subunit of a proteasome-like degradation complex believed to be a general protein degrading machinery. The polypeptide is ATP-dependent protease subunit HslV (Caldicellulosiruptor bescii (strain ATCC BAA-1888 / DSM 6725 / KCTC 15123 / Z-1320) (Anaerocellum thermophilum)).